Here is a 544-residue protein sequence, read N- to C-terminus: Cytochrome P450 82A1 (544 aa).

Cysteine 481 contributes to the heme binding site.

This sequence belongs to the cytochrome P450 family. The cofactor is heme.

It localises to the membrane. The polypeptide is Cytochrome P450 82A1 (CYP82A1) (Pisum sativum (Garden pea)).